The chain runs to 317 residues: tRNA dimethylallyltransferase (317 aa).

An ATP-binding site is contributed by 14 to 21 (GPTAVGKT). A substrate-binding site is contributed by 16–21 (TAVGKT). The segment at 39-42 (DSMQ) is interaction with substrate tRNA.

Belongs to the IPP transferase family. In terms of assembly, monomer. Mg(2+) is required as a cofactor.

It carries out the reaction adenosine(37) in tRNA + dimethylallyl diphosphate = N(6)-dimethylallyladenosine(37) in tRNA + diphosphate. Its function is as follows. Catalyzes the transfer of a dimethylallyl group onto the adenine at position 37 in tRNAs that read codons beginning with uridine, leading to the formation of N6-(dimethylallyl)adenosine (i(6)A). This chain is tRNA dimethylallyltransferase, found in Bacillus cereus (strain AH820).